The following is a 288-amino-acid chain: METVIENIPPAKPKWLKVKLPIGQKYTELRGLVDKYSLNTICTSGSCPNMGECWGEGTATFMILGNVCTRSCGFCGVKTGRPETVDWDEPEKVARSIKIMNIKHAVITSVDRDDLKDGGSIIWMETVRAIRRMNPNTTLETLIPDFQGIERNIDRIVEANPEVVSHNMETVRRLTREVRIQAKYDRSLEVLRYLKEKGINRTKSGIMLGLGETEEEVYQTMRDLRDANVDVVTIGQYLQPTKKHLPVKEFITPELFAKYEKYGIELGFRHVESGPLVRSSYKAQKHIL.

[4Fe-4S] cluster-binding residues include C42, C47, C53, C68, C72, C75, and S280. Residues 54–269 (WGEGTATFMI…EKYGIELGFR (216 aa)) form the Radical SAM core domain.

The protein belongs to the radical SAM superfamily. Lipoyl synthase family. [4Fe-4S] cluster is required as a cofactor.

The protein localises to the cytoplasm. It catalyses the reaction [[Fe-S] cluster scaffold protein carrying a second [4Fe-4S](2+) cluster] + N(6)-octanoyl-L-lysyl-[protein] + 2 oxidized [2Fe-2S]-[ferredoxin] + 2 S-adenosyl-L-methionine + 4 H(+) = [[Fe-S] cluster scaffold protein] + N(6)-[(R)-dihydrolipoyl]-L-lysyl-[protein] + 4 Fe(3+) + 2 hydrogen sulfide + 2 5'-deoxyadenosine + 2 L-methionine + 2 reduced [2Fe-2S]-[ferredoxin]. Its pathway is protein modification; protein lipoylation via endogenous pathway; protein N(6)-(lipoyl)lysine from octanoyl-[acyl-carrier-protein]: step 2/2. In terms of biological role, catalyzes the radical-mediated insertion of two sulfur atoms into the C-6 and C-8 positions of the octanoyl moiety bound to the lipoyl domains of lipoate-dependent enzymes, thereby converting the octanoylated domains into lipoylated derivatives. The protein is Lipoyl synthase of Flavobacterium johnsoniae (strain ATCC 17061 / DSM 2064 / JCM 8514 / BCRC 14874 / CCUG 350202 / NBRC 14942 / NCIMB 11054 / UW101) (Cytophaga johnsonae).